The primary structure comprises 83 residues: NAD(P)H-quinone oxidoreductase subunit L (83 aa).

2 helical membrane passes run 15–35 and 53–73; these read LLVLLAYTVLGGLYLVVVPLA and LGIYGMVFFFFPGMILFAPFL.

Belongs to the complex I NdhL subunit family. NDH-1 can be composed of about 15 different subunits; different subcomplexes with different compositions have been identified which probably have different functions.

It is found in the cellular thylakoid membrane. The enzyme catalyses a plastoquinone + NADH + (n+1) H(+)(in) = a plastoquinol + NAD(+) + n H(+)(out). The catalysed reaction is a plastoquinone + NADPH + (n+1) H(+)(in) = a plastoquinol + NADP(+) + n H(+)(out). NDH-1 shuttles electrons from an unknown electron donor, via FMN and iron-sulfur (Fe-S) centers, to quinones in the respiratory and/or the photosynthetic chain. The immediate electron acceptor for the enzyme in this species is believed to be plastoquinone. Couples the redox reaction to proton translocation, and thus conserves the redox energy in a proton gradient. Cyanobacterial NDH-1 also plays a role in inorganic carbon-concentration. The chain is NAD(P)H-quinone oxidoreductase subunit L from Synechococcus sp. (strain CC9605).